The sequence spans 83 residues: Apolipoprotein C-I, acidic form (83 aa).

The first 26 residues, 1 to 26 (MRLFLSLPVLVVVLSMVLEGPAPAQG), serve as a signal peptide directing secretion.

It belongs to the apolipoprotein C1 family.

It is found in the secreted. The sequence is that of Apolipoprotein C-I, acidic form (APOC1A) from Gorilla gorilla gorilla (Western lowland gorilla).